The chain runs to 1146 residues: Inositol hexakisphosphate and diphosphoinositol-pentakisphosphate kinase (1146 aa).

Residues Met-1 to Leu-33 are disordered. Residues Gln-16–Ser-25 are compositionally biased toward polar residues. A phosphoserine mark is found at Ser-31, Ser-54, and Ser-77. The segment at Thr-93–Pro-185 is disordered. The segment covering Gly-96–Thr-106 has biased composition (low complexity). The segment covering Lys-110–Ala-120 has biased composition (basic and acidic residues). Residues Leu-125–Gly-144 show a composition bias toward polar residues. Low complexity predominate over residues Ser-164–Ser-178. Ala-197 to Lys-198 contributes to the substrate binding site. ATP-binding positions include Arg-278, Lys-351, His-358, Arg-377, Glu-402 to Met-405, and Asp-412 to Lys-414. Residue Arg-377–Lys-378 coordinates substrate. Substrate is bound by residues Lys-414 and Arg-428. Residues Ser-430, Asp-475, and Asp-487–Asn-489 each bind ATP. A substrate-binding site is contributed by Ser-492–Lys-495. The segment at Arg-530 to Asp-597 is polyphosphoinositide-binding domain. Phosphoserine occurs at positions 895 and 1107. A disordered region spans residues Thr-1106–Asp-1146.

This sequence belongs to the histidine acid phosphatase family. VIP1 subfamily.

It is found in the cytoplasm. It localises to the cytoskeleton. The catalysed reaction is 1D-myo-inositol hexakisphosphate + ATP = 1-diphospho-1D-myo-inositol 2,3,4,5,6-pentakisphosphate + ADP. It carries out the reaction 5-diphospho-1D-myo-inositol 1,2,3,4,6-pentakisphosphate + ATP + H(+) = 1,5-bis(diphospho)-1D-myo-inositol 2,3,4,6-tetrakisphosphate + ADP. In terms of biological role, bifunctional inositol kinase that acts in concert with the IP6K kinases to synthesize the diphosphate group-containing inositol pyrophosphates diphosphoinositol pentakisphosphate, PP-InsP5, and bis-diphosphoinositol tetrakisphosphate, (PP)2-InsP4. Phosphorylates inositol hexakisphosphate (InsP6) at position 1 to produce PP-InsP5 which is in turn phosphorylated by IP6Ks to produce (PP)2-InsP4. Alternatively, phosphorylates PP-InsP5 at position 1, produced by IP6Ks from InsP6, to produce (PP)2-InsP4. Required for maintaining cellular integrity, normal growth and interactions with the ARP complex. Acts as a regulator of the PHO80-PHO85 cyclin/cyclin-dependent kinase (CDK) complex, thereby regulating signaling of phosphate availability. Required for the function of the cortical actin cytoskeleton, possibly by participating in correct F-actin localization and ensuring polarized growth. Regulates polarized growth and modulates interphase microtubule cytoskeleton. Regulates microtubule dynamics without the requirement of microtubule plus-end tracking protein Mal3. Required for growth zone selection. This Saccharomyces cerevisiae (strain ATCC 204508 / S288c) (Baker's yeast) protein is Inositol hexakisphosphate and diphosphoinositol-pentakisphosphate kinase.